The primary structure comprises 150 residues: MNVILLDKIANLGNLGDQVSVKAGYARNFLLPQGKAVVANESNVKVFEARRAELEAKLAAELAAANLRAEKITALEAVVIASKAGDEGKLFGSVGNRDIADAVTAAGVELAKAEVRLPLGALRTTGDFEVEVQLHTEVKAVVKVSVVAEA.

This sequence belongs to the bacterial ribosomal protein bL9 family.

Functionally, binds to the 23S rRNA. The protein is Large ribosomal subunit protein bL9 of Shewanella baltica (strain OS155 / ATCC BAA-1091).